Here is a 173-residue protein sequence, read N- to C-terminus: NADH-ubiquinone oxidoreductase chain 6 (173 aa).

Helical transmembrane passes span 1–21 (MTYFVLFLGLCFVLGGLAVAS), 27–47 (YGVVGLVVASVAGCGWLLSLG), 48–68 (VSFVSLVLFMVYLGGMLVVFV), 87–107 (VVGYGAGFVLVLVVGGVVGGL), and 139–159 (CGVGMFLVAGWGLLLTLFVVL).

Belongs to the complex I subunit 6 family.

Its subcellular location is the mitochondrion membrane. It carries out the reaction a ubiquinone + NADH + 5 H(+)(in) = a ubiquinol + NAD(+) + 4 H(+)(out). Its function is as follows. Core subunit of the mitochondrial membrane respiratory chain NADH dehydrogenase (Complex I) that is believed to belong to the minimal assembly required for catalysis. Complex I functions in the transfer of electrons from NADH to the respiratory chain. The immediate electron acceptor for the enzyme is believed to be ubiquinone. In Larus canus (Common gull), this protein is NADH-ubiquinone oxidoreductase chain 6 (MT-ND6).